The sequence spans 763 residues: Phosphoglycerol transferase I (763 aa).

The next 4 membrane-spanning stretches (helical) occupy residues 1 to 21 (MSEL…AWKA), 26 to 46 (WWFA…ITLY), 77 to 97 (ILPG…LGWV), and 108 to 128 (VGYS…SPAF).

The protein belongs to the OpgB family.

Its subcellular location is the cell inner membrane. The catalysed reaction is a phosphatidylglycerol + a membrane-derived-oligosaccharide D-glucose = a 1,2-diacyl-sn-glycerol + a membrane-derived-oligosaccharide 6-(glycerophospho)-D-glucose.. Its pathway is glycan metabolism; osmoregulated periplasmic glucan (OPG) biosynthesis. Transfers a phosphoglycerol residue from phosphatidylglycerol to the membrane-bound nascent glucan backbones. This chain is Phosphoglycerol transferase I, found in Salmonella schwarzengrund (strain CVM19633).